The primary structure comprises 343 residues: Olfactory receptor 1E3 (343 aa).

Topologically, residues 1–28 are extracellular; that stretch reads MMKKNQTMISEFLLLGLPIQPEQQNLFY. N-linked (GlcNAc...) asparagine glycosylation occurs at Asn5. Residues 29-49 form a helical membrane-spanning segment; the sequence is ALFLAVYLTTLLGNLLVIVLI. At 50 to 107 the chain is on the cytoplasmic side; the sequence is RLDSHLHMPMYLCLSNLSFSDLCFSSVTMPKLLQNMQSQNPSIPFADCLAQMYFHLFY. Cys97 and Cys179 form a disulfide bridge. Residues 108–128 traverse the membrane as a helical segment; that stretch reads GVLESFLLVVMAYHCYVAICF. Residues 129 to 141 lie on the Extracellular side of the membrane; it reads PLHYTTIMSPKCC. The chain crosses the membrane as a helical span at residues 142–162; the sequence is LGLLTLSWLLTTAHATLHTLL. Residues 163–195 are Cytoplasmic-facing; that stretch reads MARLSFCAENVIPHFFCDTSTLLKLACSNTQVN. The chain crosses the membrane as a helical span at residues 196-216; the sequence is GWVMFFMGGLILVIPFLLLIM. Residues 217–242 are Extracellular-facing; sequence SCARIVSTILRVPSTGGIQKAFSTCG. A helical membrane pass occupies residues 243 to 263; the sequence is PHLSVVSLFYGTIIGLYLCPL. Over 264–271 the chain is Cytoplasmic; the sequence is TNHNTVKD. The chain crosses the membrane as a helical span at residues 272 to 292; it reads TVMAVMYTGVTHMLNPFIYSL. Residues 293–310 are Extracellular-facing; sequence RNRDMRGNPGQSLQHKEN. A helical membrane pass occupies residues 311–331; sequence FFVFKIVIVGILPLLNLVGVV. The Cytoplasmic segment spans residues 332–343; the sequence is KLIMKYHSKSVA.

It belongs to the G-protein coupled receptor 1 family.

The protein resides in the cell membrane. Odorant receptor. This chain is Olfactory receptor 1E3 (OR1E3), found in Homo sapiens (Human).